The following is a 167-amino-acid chain: DNA-directed RNA polymerase II subunit rpb-9 (167 aa).

The interval 28–49 (DDMYDQNGASPAPSQNEKPGKS) is disordered. The span at 34 to 44 (NGASPAPSQNE) shows a compositional bias: polar residues. Zn(2+) contacts are provided by Cys59, Cys62, Cys81, Cys84, Cys128, Cys131, Cys156, and Cys161. The C4-type zinc-finger motif lies at 59–84 (CPECNNMLYPREDKESRVLMYSCRNC). Residues 124–166 (EEHQCPVCGKSKAVFFQAQTKKAEEEMRLYYVCASQDCQHRWT) form a TFIIS-type zinc finger.

The protein belongs to the archaeal RpoM/eukaryotic RPA12/RPB9/RPC11 RNA polymerase family. In terms of assembly, component of the RNA polymerase II (Pol II) complex consisting of 12 subunits. Expressed in the soma and in the germline.

Its subcellular location is the nucleus. It is found in the nucleolus. DNA-dependent RNA polymerase catalyzes the transcription of DNA into RNA using the four ribonucleoside triphosphates as substrates. Component of RNA polymerase II which synthesizes mRNA precursors and many functional non-coding RNAs. Pol II is the central component of the basal RNA polymerase II transcription machinery. It is composed of mobile elements that move relative to each other. RPB9 is part of the upper jaw surrounding the central large cleft and thought to grab the incoming DNA template. Recruits ints-6, a component of the Integrator complex to PIWI-interacting RNA (piRNA) genes, to mediate Integrator complex-dependent cleavage of 3' ends of nascent transcripts upon RNA Pol II backtracking to terminate transcription and generate piRNA precursors. Promotes the biogenesis of secondary 22G-siRNAs (a class of 22 nucleotide siRNAs that possess a triphosphorylated guanine residue at the 5'-end). Involved in gene silencing mediated by a class of 21 nucleotide piRNAs that possess a uracil residue at the 5'-end (also called 21U-RNAs) and guide the Piwi protein prg-1 to its DNA targets for silencing. Plays a role in small RNA-directed transgenerational epigenetic inheritance (also called RNAe) over several generations. Not required for the transgenerational inheritance of exogenous small interfering RNAs (RNAi). May play a role in the silencing of the DNA transposable elements from the DNA transposon families, Chapaev-2 and CEMUDR1. The polypeptide is DNA-directed RNA polymerase II subunit rpb-9 (Caenorhabditis elegans).